A 424-amino-acid polypeptide reads, in one-letter code: Inhibin beta A chain (424 aa).

A signal peptide spans 1 to 20; that stretch reads MPLLWLRGFLLASCWIIVRS. Positions 21–308 are excised as a propeptide; it reads SPTPGSEGHG…EDHPHRRRRR (288 aa). The N-linked (GlcNAc...) asparagine glycan is linked to N165. Residues 264-275 show a composition bias toward basic and acidic residues; that stretch reads EVDGDGKKKDGS. A disordered region spans residues 264 to 306; that stretch reads EVDGDGKKKDGSDGGLEEEKEQSHRPFLMLQARQSEDHPHRRR. 4 disulfide bridges follow: C312–C320, C319–C389, C348–C421, and C352–C423.

The protein belongs to the TGF-beta family. As to quaternary structure, dimeric, linked by one or more disulfide bonds. Inhibin A is a dimer of alpha/INHA and beta-A/INHBA. Activin A is a homodimer of beta-A/INHBA. Activin AB is a dimer of beta-A/INHBA and beta-B/INHBB. Interacts with FST and FSTL3; these interactions prevent activin A interaction to its type II receptor. Activin A interacts with ACVR2A. Activin A interacts with BMPR2. Inhibin A interacts with ACVR1; this interaction creates a non-signaling complex (NSC) that inhibits ACVR1-mediated BMP signaling. Inhibin A interacts with ACVR2A. In terms of tissue distribution, uterus, ovary and liver.

It localises to the secreted. Its function is as follows. Inhibins/activins are involved in regulating a number of diverse functions such as hypothalamic and pituitary hormone secretion, gonadal hormone secretion, germ cell development and maturation, erythroid differentiation, insulin secretion, nerve cell survival, embryonic axial development or bone growth, depending on their subunit composition. In terms of biological role, activin A is a homodimer of INHBA that plays a role in several essential biological processes including embryonic development, stem cell maintenance and differentiation, haematopoiesis, cell proliferation and tissue fibrosis. Signals through type I (such as ACVR1B or ACVR1C) and type II receptors (such as ACVR2A, ACVR2B or BMPR2) which, upon ligand binding, phosphorylate SMAD2 and SMAD3 intracellular signaling mediators that form a complex with SMAD4, translocate to the nucleus and modulate gene expression. Can also activate alternative non-canonical intracellular signaling pathways including the p38 MAPK, extracellular signal-regulated kinases 1/2 (ERK1/2) and c-Jun N-terminal kinases (JNKs) to modulate cell migration and differentiation. Alternatively, promotes osteoblastic differentiation via ACVRL1-SMAD1/5/9 pathway. In addition, can engage the type I receptor ACVR1 to form an ACVR1-activin A-type II receptor non-signaling complex (NSC) that renders receptors unavailable for engagement with BMPs, hence resulting in an apparent inhibition of ACVR1-mediated BMP signaling. Functionally, inhibin A is a dimer of alpha/INHA and beta-A/INHBA that functions as a feedback regulator in the hypothalamic-pituitary-gonadal (HPG) axis. Inhibits the secretion of FSH from the anterior pituitary gland by acting on pituitary gonadotrope cells. Antagonizes activin A by binding to the proteoglycan, betaglycan, and forming a stable complex with and, thereby, sequestering type II activin receptors while excluding type I receptor. The chain is Inhibin beta A chain (Inhba) from Mus musculus (Mouse).